The primary structure comprises 452 residues: Chromosomal replication initiator protein DnaA (452 aa).

The segment at 1–84 is domain I, interacts with DnaA modulators; that stretch reads MTENEQIFWN…SIEYVFEETQ (84 aa). Residues 84 to 110 form a domain II region; it reads QSTSNSPQISQNKTAELATETLPFVQN. Residues 111-329 form a domain III, AAA+ region region; it reads DLNPKYSFDN…GALKDISLVA (219 aa). ATP-binding residues include Gly-155, Gly-157, Lys-158, and Thr-159. The interval 330–452 is domain IV, binds dsDNA; sequence NFKKLDVITV…EMETIKNKIK (123 aa).

Belongs to the DnaA family. In terms of assembly, oligomerizes as a right-handed, spiral filament on DNA at oriC.

The protein localises to the cytoplasm. Functionally, plays an essential role in the initiation and regulation of chromosomal replication. ATP-DnaA binds to the origin of replication (oriC) to initiate formation of the DNA replication initiation complex once per cell cycle. Binds the DnaA box (a 9 base pair repeat at the origin) and separates the double-stranded (ds)DNA. Forms a right-handed helical filament on oriC DNA; dsDNA binds to the exterior of the filament while single-stranded (ss)DNA is stabiized in the filament's interior. The ATP-DnaA-oriC complex binds and stabilizes one strand of the AT-rich DNA unwinding element (DUE), permitting loading of DNA polymerase. After initiation quickly degrades to an ADP-DnaA complex that is not apt for DNA replication. Binds acidic phospholipids. The protein is Chromosomal replication initiator protein DnaA of Streptococcus mutans serotype c (strain ATCC 700610 / UA159).